The following is a 332-amino-acid chain: Succinylglutamate desuccinylase (332 aa).

The Zn(2+) site is built by H59, E62, and H151. The active site involves E215.

The protein belongs to the AspA/AstE family. Succinylglutamate desuccinylase subfamily. It depends on Zn(2+) as a cofactor.

The catalysed reaction is N-succinyl-L-glutamate + H2O = L-glutamate + succinate. It functions in the pathway amino-acid degradation; L-arginine degradation via AST pathway; L-glutamate and succinate from L-arginine: step 5/5. Functionally, transforms N(2)-succinylglutamate into succinate and glutamate. This chain is Succinylglutamate desuccinylase, found in Pseudomonas paraeruginosa (strain DSM 24068 / PA7) (Pseudomonas aeruginosa (strain PA7)).